We begin with the raw amino-acid sequence, 361 residues long: Cytochrome c peroxidase, mitochondrial (361 aa).

The N-terminal 41 residues, 1 to 41 (MASAARSASRAFLRSSLRPAVRSSRFALPTQGLRVASRRGY), are a transit peptide targeting the mitochondrion. Catalysis depends on histidine 122, which acts as the Proton acceptor. Histidine 245 contacts heme b. Tryptophan 261 functions as the Tryptophan radical intermediate in the catalytic mechanism.

It belongs to the peroxidase family. Cytochrome c peroxidase subfamily. In terms of assembly, forms a one-to-one complex with cytochrome c. Heme b is required as a cofactor.

The protein localises to the mitochondrion matrix. It localises to the mitochondrion intermembrane space. It carries out the reaction 2 Fe(II)-[cytochrome c] + H2O2 + 2 H(+) = 2 Fe(III)-[cytochrome c] + 2 H2O. In terms of biological role, destroys radicals which are normally produced within the cells and which are toxic to biological systems. This Emericella nidulans (strain FGSC A4 / ATCC 38163 / CBS 112.46 / NRRL 194 / M139) (Aspergillus nidulans) protein is Cytochrome c peroxidase, mitochondrial (ccp1).